The chain runs to 334 residues: Protein-methionine-sulfoxide reductase catalytic subunit MsrP (334 aa).

Residues 1-44 (MKKNQFLKESDVTAESVFFMKRRQVLKALGISAAALSLPHAAHA) constitute a signal peptide (tat-type signal). Mo-molybdopterin-binding positions include N88, 91-92 (YE), C146, T181, N233, R238, and 249-251 (GIK).

It belongs to the MsrP family. Heterodimer of a catalytic subunit (MsrP) and a heme-binding subunit (MsrQ). Mo-molybdopterin serves as cofactor. In terms of processing, predicted to be exported by the Tat system. The position of the signal peptide cleavage has not been experimentally proven.

The protein resides in the periplasm. The enzyme catalyses L-methionyl-[protein] + a quinone + H2O = L-methionyl-(S)-S-oxide-[protein] + a quinol. The catalysed reaction is L-methionyl-[protein] + a quinone + H2O = L-methionyl-(R)-S-oxide-[protein] + a quinol. In terms of biological role, part of the MsrPQ system that repairs oxidized periplasmic proteins containing methionine sulfoxide residues (Met-O), using respiratory chain electrons. Thus protects these proteins from oxidative-stress damage caused by reactive species of oxygen and chlorine generated by the host defense mechanisms. MsrPQ is essential for the maintenance of envelope integrity under bleach stress, rescuing a wide series of structurally unrelated periplasmic proteins from methionine oxidation, including the primary periplasmic chaperone SurA and the lipoprotein Pal. The catalytic subunit MsrP is non-stereospecific, being able to reduce both (R-) and (S-) diastereoisomers of methionine sulfoxide. This is Protein-methionine-sulfoxide reductase catalytic subunit MsrP from Escherichia coli (strain UTI89 / UPEC).